We begin with the raw amino-acid sequence, 541 residues long: Glucose-6-phosphate isomerase (541 aa).

Residue Glu-346 is the Proton donor of the active site. Active-site residues include His-377 and Lys-506.

The protein belongs to the GPI family.

The protein resides in the cytoplasm. The catalysed reaction is alpha-D-glucose 6-phosphate = beta-D-fructose 6-phosphate. The protein operates within carbohydrate biosynthesis; gluconeogenesis. It participates in carbohydrate degradation; glycolysis; D-glyceraldehyde 3-phosphate and glycerone phosphate from D-glucose: step 2/4. Functionally, catalyzes the reversible isomerization of glucose-6-phosphate to fructose-6-phosphate. This is Glucose-6-phosphate isomerase from Agrobacterium fabrum (strain C58 / ATCC 33970) (Agrobacterium tumefaciens (strain C58)).